A 557-amino-acid chain; its full sequence is MSLIKKKNKNIRIIPLGGVGEIAKNMYIVEVDDEMFMLDAGLMFPEDEMLGVDIVIPDIQYVIENKEKLKGIFLTHGHEHAIGAVTYVLEQVDAPVYGSKLTIALIKENMKARNVNKKVRYYTVNNESVMRFKGVNVTFFNTTHSIPDSLGICIHTSYGAIVYTGEFKFDQSLHGHYAPDLKKMTEIGEAGVFALISDSTEAEKPGYNTPENVIESHMYDAFTKVKGRLIVSCYASNFIRIQQVLNLAQRLNRKVSFLGRSLESSFNIARKMGYFDISKDLLIPINEVENYPKNEVIIIATGMQGEPVEALSQMAQKKHKIMNIEPGDSVFLTITASANMEVIVGNTLNELVRAGAEIIPNSKKIHASSHGCMEELKMMINIMKPEYFIPVNGEFKMQISHAKLANEAGVQPEKIFLVEKGDVVNYDGEEMILNEKVNSGNVLIDGIGVGDVGNIVLRDRHLLAEDGIFIAVVTLDPKNRRIAAGPEIQSRGFVYVRESEALLNEAEEKVREIVELGLQEKRIEWSEIKQSMRDQISKLLFENTKRRPMIIPVISEI.

The Zn(2+) site is built by histidine 76, histidine 78, histidine 144, and glutamate 166. Residue 366 to 370 coordinates substrate; it reads HASSH.

It belongs to the metallo-beta-lactamase superfamily. RNA-metabolizing metallo-beta-lactamase-like family. Bacterial RNase J subfamily. Homodimer, may be a subunit of the RNA degradosome. The cofactor is Zn(2+).

It localises to the cytoplasm. An RNase that has 5'-3' exonuclease and possibly endoonuclease activity. Involved in maturation of rRNA and in some organisms also mRNA maturation and/or decay. This is Ribonuclease J 2 from Staphylococcus saprophyticus subsp. saprophyticus (strain ATCC 15305 / DSM 20229 / NCIMB 8711 / NCTC 7292 / S-41).